The primary structure comprises 82 residues: Beta-insect depressant toxin LqqIT2 (82 aa).

The first 21 residues, 1–21 (MKLLLLLIVSASMLIESLVNA), serve as a signal peptide directing secretion. Positions 22–82 (DGYIRKRDGC…TWKSETNTCG (61 aa)) constitute an LCN-type CS-alpha/beta domain. 4 cysteine pairs are disulfide-bonded: cysteine 31-cysteine 81, cysteine 35-cysteine 56, cysteine 42-cysteine 63, and cysteine 46-cysteine 65.

This sequence belongs to the long (4 C-C) scorpion toxin superfamily. Sodium channel inhibitor family. Beta subfamily. In terms of tissue distribution, expressed by the venom gland.

The protein localises to the secreted. Functionally, depressant insect beta-toxins cause a transient contraction paralysis followed by a slow flaccid paralysis. They bind voltage-independently at site-4 of sodium channels and shift the voltage of activation toward more negative potentials thereby affecting sodium channel activation and promoting spontaneous and repetitive firing. Aside from typical beta-toxin effects, this toxin also affects the inactivation process and ion selectivity of the insect voltage-gated sodium channel. This toxin is active only on insects. Is active on the insect voltage-gated sodium channel para. In vivo, when injected intraperitoneally, it exhibits analgesic activity, increasing hot plate and tail flick withdrawal latencies in a dose-dependent fashion. This phenomenon might be partly due to an inhibitory mechanism activated by noxious stimuli. This chain is Beta-insect depressant toxin LqqIT2, found in Leiurus quinquestriatus quinquestriatus (Egyptian scorpion).